The chain runs to 902 residues: Inter-alpha-trypsin inhibitor heavy chain H1 (902 aa).

The signal sequence occupies residues 1-28 (MDGTMGLQGLLCLCLASHLALQAMPTQG). A VIT domain is found at 29-158 (SPTDSTKGNK…KATFQLTYEE (130 aa)). S-linked (Hex...) cysteine glycosylation occurs at Cys52. Asn69 is a glycosylation site (N-linked (GlcNAc...) asparagine). Ser121 is subject to Phosphoserine. Residue Asn277 is glycosylated (N-linked (GlcNAc...) asparagine). Residues 282–442 (NKNVVFVIDI…WNFLEVRALE (161 aa)) form the VWFA domain. A phosphothreonine mark is found at Thr394 and Thr399. The span at 637–651 (SASQPSPTHPSSSIQ) shows a compositional bias: polar residues. Positions 637 to 656 (SASQPSPTHPSSSIQKLPDR) are disordered. Ser639 carries an O-linked (GalNAc...) serine glycan. A glycan (O-linked (GalNAc...) threonine) is linked at Thr644. Asp663 is modified (aspartate 1-(chondroitin 4-sulfate)-ester). Residues 664-902 (PHFIIRVPQK…HTDYIVPDIF (239 aa)) constitute a propeptide that is removed on maturation. Asn741 is a glycosylation site (N-linked (GlcNAc...) asparagine).

Belongs to the ITIH family. As to quaternary structure, I-alpha-I plasma protease inhibitors are assembled from one or two heavy chains (HC) and one light chain, bikunin. Inter-alpha-inhibitor (I-alpha-I) is composed of ITIH1/HC1, ITIH2/HC2 and bikunin. Interacts with TNFAIP6 (via Link and CUB domains). In terms of processing, heavy chains are linked to bikunin via chondroitin 4-sulfate esterified to the alpha-carboxyl of the C-terminal aspartate after propeptide cleavage. The S-linked glycan is composed of two 6-carbon sugars, possibly Glc or Gal.

It localises to the secreted. Functionally, may act as a carrier of hyaluronan in serum or as a binding protein between hyaluronan and other matrix protein, including those on cell surfaces in tissues to regulate the localization, synthesis and degradation of hyaluronan which are essential to cells undergoing biological processes. This chain is Inter-alpha-trypsin inhibitor heavy chain H1 (ITIH1), found in Sus scrofa (Pig).